A 170-amino-acid chain; its full sequence is NADH-ubiquinone oxidoreductase chain 6 (170 aa).

The next 5 membrane-spanning stretches (helical) occupy residues 1 to 21, 26 to 46, 49 to 69, 86 to 106, and 138 to 158; these read MIYM…AVAS, FYAA…IVSF, SFLS…VFAY, VVFY…FLGG, and WVII…GIWV.

Belongs to the complex I subunit 6 family. In terms of assembly, core subunit of respiratory chain NADH dehydrogenase (Complex I) which is composed of 45 different subunits.

It is found in the mitochondrion inner membrane. The catalysed reaction is a ubiquinone + NADH + 5 H(+)(in) = a ubiquinol + NAD(+) + 4 H(+)(out). In terms of biological role, core subunit of the mitochondrial membrane respiratory chain NADH dehydrogenase (Complex I) which catalyzes electron transfer from NADH through the respiratory chain, using ubiquinone as an electron acceptor. Essential for the catalytic activity and assembly of complex I. This is NADH-ubiquinone oxidoreductase chain 6 (mt-nd6) from Xenopus laevis (African clawed frog).